We begin with the raw amino-acid sequence, 253 residues long: Glutamate racemase (253 aa).

Substrate is bound by residues aspartate 7–serine 8 and tyrosine 39–glycine 40. Cysteine 70 acts as the Proton donor/acceptor in catalysis. Position 71–72 (asparagine 71–threonine 72) interacts with substrate. Catalysis depends on cysteine 180, which acts as the Proton donor/acceptor. Threonine 181–histidine 182 lines the substrate pocket.

Belongs to the aspartate/glutamate racemases family.

The enzyme catalyses L-glutamate = D-glutamate. It participates in cell wall biogenesis; peptidoglycan biosynthesis. Its function is as follows. Provides the (R)-glutamate required for cell wall biosynthesis. The chain is Glutamate racemase from Halothermothrix orenii (strain H 168 / OCM 544 / DSM 9562).